The following is a 512-amino-acid chain: MEELKGYLEKSRSKQQHFLYPLLFQEYIYALAHDHGLNVNGSFFYEPAEISGYDKKFSSLLAKRLITRMYQQNYLINSVNDSNQNRFVGHNRNFYSQMISEGFAVIVEIXFSLRLVSSLEEKKEIPKSQNLRSIHSIFPFFEDKLSHLNCVSDILIPYPVHLEILVQILQCWIQDVPSLHLLRFFFHEYHNWNNLITPKKSNYYGFSKENPRLFLFLYNSYVVECESILVFLRKQSSYLRSTSSGTFLERAHFYEKIEQHLVVLCCNDFQKTLWLFKDPFMHYVRYQGKSILASKGTHLLMKKWKSYFVNFWQCHFHFWSQPCRIHINQFSNFSFYFLGYLSSVPINPSAVKSQMLENSFLVDTATKKFETIVPIIPMIGALSKAKFCNVSGNPISKPVWADLSDSDIIDRFGRTCRNLSHYYSGSSKKQSLYRIKYILRLSCARTLARKHKSTVRAFLQRLGSEFLEEFFTEEEKALSLILPRISYPLHKLYRERIWYLDIIRINDLVNHL.

It belongs to the intron maturase 2 family. MatK subfamily.

It localises to the plastid. The protein localises to the chloroplast. In terms of biological role, usually encoded in the trnK tRNA gene intron. Probably assists in splicing its own and other chloroplast group II introns. This chain is Maturase K, found in Amorphophallus titanum (Titan arum).